Consider the following 852-residue polypeptide: Carbohydrate-responsive element-binding protein (852 aa).

The span at 1–12 shows a compositional bias: low complexity; sequence MAGALAGLAAGL. Disordered regions lie at residues 1–36 and 54–80; these read MAGA…SLRR and VSSP…FGPR. Residues serine 20, serine 23, and serine 25 each carry the phosphoserine modification. A Phosphothreonine modification is found at threonine 27. The residue at position 29 (serine 29) is a Phosphoserine. A Phosphoserine modification is found at serine 196. Disordered regions lie at residues 328–365, 486–527, and 548–648; these read DSLF…CPGP, PCFS…NNPC, and STLL…NKTE. Over residues 505–521 the composition is skewed to low complexity; it reads ASPPTLAPATASPPTTA. Over residues 548–559 the composition is skewed to polar residues; it reads STLLRSPGSPQE. The residue at position 556 (serine 556) is a Phosphoserine; by AMPK. Over residues 568–584 the composition is skewed to pro residues; the sequence is FLPPTPAPTPPRPPPGP. Serine 602, serine 614, and serine 631 each carry phosphoserine. The bHLH domain maps to 649 to 703; it reads NRRITHISAEQKRRFNIKLGFDTLHGLVSTLSAQPSLKVSKATTLQKTAEYILML. The leucine-zipper stretch occupies residues 703–724; the sequence is LQQERAGLQEEAQQLRDEIEEL.

As to quaternary structure, binds DNA as a heterodimer with MLX/TCFL4. Post-translationally, phosphorylation at Ser-556 by AMPK inactivates the DNA-binding activity. As to expression, expressed in liver, heart, kidney, cerebellum and intestinal tissues.

The protein localises to the nucleus. Its function is as follows. Binds DNA as a heterodimer with MLX/TCFL4 and activates transcription. Binds to the canonical E box sequence 5'-CACGTG-3'. Plays a role in transcriptional activation of glycolytic target genes. Involved in glucose-responsive gene regulation. Regulates transcription in response to changes in cellular carbohydrate abundance such as occurs during fasting to feeding metabolic transition. Refeeding stimulates MLXIPL/ChREBP transcription factor, leading to increased BCKDK to PPM1K expression ratio, phosphorylation and activation of ACLY that ultimately results in the generation of malonyl-CoA and oxaloacetate immediate substrates of de novo lipogenesis and gluconeogenesis, respectively. The sequence is that of Carbohydrate-responsive element-binding protein (MLXIPL) from Homo sapiens (Human).